The following is a 216-amino-acid chain: Nucleoside triphosphate pyrophosphatase (216 aa).

The Proton acceptor role is filled by Asp82.

Belongs to the Maf family. A divalent metal cation is required as a cofactor.

The protein resides in the cytoplasm. It catalyses the reaction a ribonucleoside 5'-triphosphate + H2O = a ribonucleoside 5'-phosphate + diphosphate + H(+). It carries out the reaction a 2'-deoxyribonucleoside 5'-triphosphate + H2O = a 2'-deoxyribonucleoside 5'-phosphate + diphosphate + H(+). Nucleoside triphosphate pyrophosphatase. May have a dual role in cell division arrest and in preventing the incorporation of modified nucleotides into cellular nucleic acids. This Mycobacterium ulcerans (strain Agy99) protein is Nucleoside triphosphate pyrophosphatase.